The following is a 673-amino-acid chain: UvrABC system protein B (673 aa).

A Helicase ATP-binding domain is found at 26–183 (EGLEDGLAHQ…RRLAELQYTR (158 aa)). 39–46 (GVTGSGKT) contributes to the ATP binding site. Positions 92-115 (YYDYYQPEAYVPSSDTFIEKDASV) match the Beta-hairpin motif. In terms of domain architecture, Helicase C-terminal spans 431 to 597 (QVDDLLSEIR…GLNKKVVDIL (167 aa)). The region spanning 633-668 (QQKIHELEGQMMQHAQNLEFEEAAQIRDQLHQLREL) is the UVR domain.

It belongs to the UvrB family. As to quaternary structure, forms a heterotetramer with UvrA during the search for lesions. Interacts with UvrC in an incision complex.

The protein localises to the cytoplasm. Its function is as follows. The UvrABC repair system catalyzes the recognition and processing of DNA lesions. A damage recognition complex composed of 2 UvrA and 2 UvrB subunits scans DNA for abnormalities. Upon binding of the UvrA(2)B(2) complex to a putative damaged site, the DNA wraps around one UvrB monomer. DNA wrap is dependent on ATP binding by UvrB and probably causes local melting of the DNA helix, facilitating insertion of UvrB beta-hairpin between the DNA strands. Then UvrB probes one DNA strand for the presence of a lesion. If a lesion is found the UvrA subunits dissociate and the UvrB-DNA preincision complex is formed. This complex is subsequently bound by UvrC and the second UvrB is released. If no lesion is found, the DNA wraps around the other UvrB subunit that will check the other stand for damage. The polypeptide is UvrABC system protein B (Salmonella heidelberg (strain SL476)).